Here is a 439-residue protein sequence, read N- to C-terminus: Potassium/proton antiporter CemA (439 aa).

The next 6 membrane-spanning stretches (helical) occupy residues 55-75 (IMLYINTNLNNCVFIIYWSLL), 79-99 (ISLFFFDFIKTFVLIISNFFN), 220-240 (YMLFLLFIPWGFSSLLKIWFL), 317-337 (LLHLLTDIVYVITLSAVFILG), 364-384 (ILLLTDLCIGFHSPHGWEIVI), and 399-419 (IISCFVSTFPVILDTVFKYWI).

It belongs to the CemA family.

The protein resides in the plastid. The protein localises to the chloroplast inner membrane. It carries out the reaction K(+)(in) + H(+)(out) = K(+)(out) + H(+)(in). Contributes to K(+)/H(+) antiport activity by supporting proton efflux to control proton extrusion and homeostasis in chloroplasts in a light-dependent manner to modulate photosynthesis. Prevents excessive induction of non-photochemical quenching (NPQ) under continuous-light conditions. Indirectly promotes efficient inorganic carbon uptake into chloroplasts. In Physcomitrium patens (Spreading-leaved earth moss), this protein is Potassium/proton antiporter CemA.